The following is a 456-amino-acid chain: Probable mannan endo-1,4-beta-mannosidase F (456 aa).

The N-terminal stretch at 1–18 (MRPLSSAALLSAIGAVAA) is a signal peptide. In terms of domain architecture, CBM1 spans 19-54 (QVGPWGQCGGQSYTGGTSCVSGWACVFLNDWYSQCQ). The segment at 79–110 (STSVSATAPPSSTSSSTASVSSSTSSTPIPTS) is disordered. Residues 79–113 (STSVSATAPPSSTSSSTASVSSSTSSTPIPTSSGS) form a ser-rich linker region. The tract at residues 114 to 456 (FVKAEGLKFN…CAVIDHVSRI (343 aa)) is catalytic. Trp-166 and Asn-280 together coordinate substrate. The active-site Proton donor is the Glu-281. Position 356 (Tyr-356) interacts with substrate. The active-site Nucleophile is Glu-390. Trp-420 contacts substrate.

This sequence belongs to the glycosyl hydrolase 5 (cellulase A) family.

The protein localises to the secreted. The catalysed reaction is Random hydrolysis of (1-&gt;4)-beta-D-mannosidic linkages in mannans, galactomannans and glucomannans.. Functionally, endo-1,4-mannanase, a crucial enzyme for depolymerization of seed galactomannans and wood galactoglucomannans. The chain is Probable mannan endo-1,4-beta-mannosidase F (manF) from Neosartorya fischeri (strain ATCC 1020 / DSM 3700 / CBS 544.65 / FGSC A1164 / JCM 1740 / NRRL 181 / WB 181) (Aspergillus fischerianus).